The chain runs to 181 residues: TATA-box-binding protein (181 aa).

Tandem repeats lie at residues 8-84 and 99-175.

The protein belongs to the TBP family.

General factor that plays a role in the activation of archaeal genes transcribed by RNA polymerase. Binds specifically to the TATA box promoter element which lies close to the position of transcription initiation. The protein is TATA-box-binding protein of Methanobrevibacter smithii (strain ATCC 35061 / DSM 861 / OCM 144 / PS).